Consider the following 724-residue polypeptide: Propionyl-CoA carboxylase alpha chain, mitochondrial (724 aa).

The Biotin carboxylation domain maps to 48–495; the sequence is KFDKILIANR…TTKYLPEVYP (448 aa). ATP is bound by residues K163, 195 to 256, E247, and N282; that span reads SRDI…PRHI. The ATP-grasp domain occupies 167 to 364; sequence KKIATAARVS…IVQQMLRVSY (198 aa). Mg(2+) contacts are provided by E322, E335, and N337. E322, E335, and N337 together coordinate Mn(2+). Residue R339 is part of the active site. F395 contacts biotin. Residues 649 to 724 form the Biotinyl-binding domain; sequence KAKVDLSTVV…DEGEVLVELE (76 aa). Residue K690 is modified to N6-biotinyllysine.

As to quaternary structure, the holoenzyme is a dodecamer composed of 6 alpha subunits and 6 beta subunits. Interacts with sir-2.2 and sir-2.3. The cofactor is biotin. Mg(2+) serves as cofactor. Mn(2+) is required as a cofactor. In terms of processing, the biotin cofactor is covalently attached to the C-terminal biotinyl-binding domain and is required for the catalytic activity.

The protein resides in the mitochondrion matrix. The catalysed reaction is propanoyl-CoA + hydrogencarbonate + ATP = (S)-methylmalonyl-CoA + ADP + phosphate + H(+). It catalyses the reaction butanoyl-CoA + hydrogencarbonate + ATP = (2S)-ethylmalonyl-CoA + ADP + phosphate + H(+). It participates in metabolic intermediate metabolism; propanoyl-CoA degradation; succinyl-CoA from propanoyl-CoA: step 1/3. Functionally, this is one of the 2 subunits of the biotin-dependent propionyl-CoA carboxylase (PCC), a mitochondrial enzyme involved in the catabolism of odd chain fatty acids, branched-chain amino acids isoleucine, threonine, methionine, and valine and other metabolites. Propionyl-CoA carboxylase catalyzes the carboxylation of propionyl-CoA/propanoyl-CoA to D-methylmalonyl-CoA/(S)-methylmalonyl-CoA. Within the holoenzyme, the alpha subunit catalyzes the ATP-dependent carboxylation of the biotin carried by the biotin carboxyl carrier (BCC) domain, while the beta subunit then transfers the carboxyl group from carboxylated biotin to propionyl-CoA. Propionyl-CoA carboxylase also significantly acts on butyryl-CoA/butanoyl-CoA, which is converted to ethylmalonyl-CoA/(2S)-ethylmalonyl-CoA. Other alternative minor substrates include (2E)-butenoyl-CoA/crotonoyl-CoA. This is Propionyl-CoA carboxylase alpha chain, mitochondrial (pcca-1) from Caenorhabditis elegans.